Consider the following 544-residue polypeptide: Chaperonin GroEL 2 (544 aa).

ATP contacts are provided by residues 30-33 (TLGP), Lys-51, 87-91 (DGTTT), Gly-415, and Asp-496.

The protein belongs to the chaperonin (HSP60) family. Forms a cylinder of 14 subunits composed of two heptameric rings stacked back-to-back. Interacts with the co-chaperonin GroES.

It localises to the cytoplasm. It carries out the reaction ATP + H2O + a folded polypeptide = ADP + phosphate + an unfolded polypeptide.. Its function is as follows. Together with its co-chaperonin GroES, plays an essential role in assisting protein folding. The GroEL-GroES system forms a nano-cage that allows encapsulation of the non-native substrate proteins and provides a physical environment optimized to promote and accelerate protein folding. In Rhizobium johnstonii (strain DSM 114642 / LMG 32736 / 3841) (Rhizobium leguminosarum bv. viciae), this protein is Chaperonin GroEL 2.